A 752-amino-acid polypeptide reads, in one-letter code: DNA ligase (752 aa).

Residues 48–52 (DADYD), 97–98 (SL), and Glu131 contribute to the NAD(+) site. Lys133 acts as the N6-AMP-lysine intermediate in catalysis. NAD(+)-binding residues include Arg154, Glu189, Lys305, and Lys329. 4 residues coordinate Zn(2+): Cys434, Cys437, Cys452, and Cys458. The span at 599–615 (ADEGRRASLQPQRDKAW) shows a compositional bias: basic and acidic residues. Positions 599–618 (ADEGRRASLQPQRDKAWADT) are disordered. Residues 673-752 (ATQSAVAGLT…EQWLDRIGDA (80 aa)) form the BRCT domain.

The protein belongs to the NAD-dependent DNA ligase family. LigA subfamily. Mg(2+) is required as a cofactor. Mn(2+) serves as cofactor.

The catalysed reaction is NAD(+) + (deoxyribonucleotide)n-3'-hydroxyl + 5'-phospho-(deoxyribonucleotide)m = (deoxyribonucleotide)n+m + AMP + beta-nicotinamide D-nucleotide.. In terms of biological role, DNA ligase that catalyzes the formation of phosphodiester linkages between 5'-phosphoryl and 3'-hydroxyl groups in double-stranded DNA using NAD as a coenzyme and as the energy source for the reaction. It is essential for DNA replication and repair of damaged DNA. The sequence is that of DNA ligase from Jannaschia sp. (strain CCS1).